The sequence spans 29 residues: YCQFKMWTCDSERKCCEDMVCRLWCKLNL.

3 disulfide bridges follow: Cys2–Cys16, Cys9–Cys21, and Cys15–Cys25.

This sequence belongs to the neurotoxin 30 (phrixotoxin) family. As to expression, expressed by the venom gland.

It is found in the secreted. Both insecticidal and vertebrate neurotoxin that potently blocks insect calcium-activated potassium (BKCa) channels (Slo-type) in cockroach dorsal unpaired median (DUM) neurons (IC(50)=24.6 nM). This occurs in the absence of any shifts in the voltage dependence of activation. May interact with the turret and/or loop region of the external entrance to the channel and does not project deeply into the pore of the channel. Also shows toxicity to mice by introcerebroventicular injection. This chain is Lambda-theraphotoxin-Ec2c, found in Eucratoscelus constrictus (African red-rump baboon spider).